The following is a 21-amino-acid chain: Dahlein-5.5 (21 aa).

As to expression, expressed by the skin dorsal glands.

Its subcellular location is the secreted. Its function is as follows. Has no antimicrobial activity. Strongly inhibits the formation of NO by neuronal nitric oxide synthase at micromolar concentrations. In Ranoidea dahlii (Dahl's aquatic frog), this protein is Dahlein-5.5.